Consider the following 148-residue polypeptide: RxLR effector protein SFI7 (148 aa).

An N-terminal signal peptide occupies residues 1–22 (MRAYFVLLVAATAILTYGGATA). A glycan (N-linked (GlcNAc...) asparagine) is linked at asparagine 32. The RxLR-dEER motif lies at 44-58 (RSLRVAPSGGNGEER).

It belongs to the RxLR effector family.

It localises to the secreted. It is found in the host cytoplasm. The protein localises to the host cell membrane. Its function is as follows. Effector that suppresses flg22-induced post-translational MAP kinase activation in tomato but not in Arabidopsis. The perception of highly conserved pathogen- or microbe-associated molecular patterns (PAMPs/MAMPs), such as flg22, triggers converging signaling pathways recruiting MAP kinase cascades and inducing transcriptional re-programming, yielding a generic antimicrobial response. Also partially attenuates INF1-triggered cell death. The polypeptide is RxLR effector protein SFI7 (Phytophthora infestans (strain T30-4) (Potato late blight agent)).